The sequence spans 105 residues: Putative pterin-4-alpha-carbinolamine dehydratase (105 aa).

It belongs to the pterin-4-alpha-carbinolamine dehydratase family.

The catalysed reaction is (4aS,6R)-4a-hydroxy-L-erythro-5,6,7,8-tetrahydrobiopterin = (6R)-L-erythro-6,7-dihydrobiopterin + H2O. The chain is Putative pterin-4-alpha-carbinolamine dehydratase from Sinorhizobium fredii (strain NBRC 101917 / NGR234).